A 551-amino-acid chain; its full sequence is Adenylyl cyclase-associated protein (551 aa).

Positions serine 34–asparagine 55 are disordered. Residue serine 92 is modified to Phosphoserine. Threonine 96 carries the phosphothreonine modification. Residues serine 288–serine 300 show a composition bias toward polar residues. Disordered regions lie at residues serine 288 to aspartate 333 and threonine 348 to proline 395. The span at leucine 305–serine 315 shows a compositional bias: pro residues. Over residues arginine 352–histidine 361 the composition is skewed to basic and acidic residues. The C-CAP/cofactor C-like domain occupies proline 395 to valine 529.

It belongs to the CAP family.

Functionally, the N-terminal domain binds to adenylyl cyclase, thereby enabling adenylyl cyclase to be activated by upstream regulatory signals, such as Ras. The C-terminal domain is required for normal cellular morphology and growth control. In Schizosaccharomyces pombe (strain 972 / ATCC 24843) (Fission yeast), this protein is Adenylyl cyclase-associated protein (cap1).